Reading from the N-terminus, the 179-residue chain is Coatomer subunit zeta-2 (179 aa).

This sequence belongs to the adaptor complexes small subunit family. As to quaternary structure, oligomeric complex that consists of at least the alpha, beta, beta', gamma, delta, epsilon and zeta subunits.

The protein localises to the cytoplasm. The protein resides in the golgi apparatus membrane. Its subcellular location is the cytoplasmic vesicle. It is found in the COPI-coated vesicle membrane. Its function is as follows. The coatomer is a cytosolic protein complex that binds to dilysine motifs and reversibly associates with Golgi non-clathrin-coated vesicles, which further mediate biosynthetic protein transport from the ER, via the Golgi up to the trans Golgi network. Coatomer complex is required for budding from Golgi membranes, and is essential for the retrograde Golgi-to-ER transport of dilysine-tagged proteins. The zeta subunit may be involved in regulating the coat assembly and, hence, the rate of biosynthetic protein transport due to its association-dissociation properties with the coatomer complex. The chain is Coatomer subunit zeta-2 from Arabidopsis thaliana (Mouse-ear cress).